The following is a 284-amino-acid chain: Cytosolic Fe-S cluster assembly factor NUBP2 homolog (284 aa).

27 to 34 (GKGGVGKS) contributes to the ATP binding site. Cys200 and Cys203 together coordinate [4Fe-4S] cluster.

The protein belongs to the Mrp/NBP35 ATP-binding proteins family. NUBP2/CFD1 subfamily. As to quaternary structure, heterotetramer of 2 NUBP1 and 2 NUBP2 chains. It depends on [4Fe-4S] cluster as a cofactor.

It is found in the cytoplasm. Component of the cytosolic iron-sulfur (Fe/S) protein assembly (CIA) machinery. Required for maturation of extramitochondrial Fe-S proteins. The NUBP1-NUBP2 heterotetramer forms a Fe-S scaffold complex, mediating the de novo assembly of an Fe-S cluster and its transfer to target apoproteins. The polypeptide is Cytosolic Fe-S cluster assembly factor NUBP2 homolog (Monosiga brevicollis (Choanoflagellate)).